A 254-amino-acid chain; its full sequence is Phosphatidylglycerol--prolipoprotein diacylglyceryl transferase (254 aa).

Transmembrane regions (helical) follow at residues 11–31 (LAIR…LLLA), 49–69 (FLIA…IFEF), 84–104 (QGGL…YIYL), and 109–129 (ESFF…QAIG). Arginine 130 lines the a 1,2-diacyl-sn-glycero-3-phospho-(1'-sn-glycerol) pocket. Transmembrane regions (helical) follow at residues 169-189 (PTFL…VYLL), 196-216 (GIVF…IEGL), and 228-248 (VAQL…YNII).

The protein belongs to the Lgt family.

The protein resides in the cell membrane. It carries out the reaction L-cysteinyl-[prolipoprotein] + a 1,2-diacyl-sn-glycero-3-phospho-(1'-sn-glycerol) = an S-1,2-diacyl-sn-glyceryl-L-cysteinyl-[prolipoprotein] + sn-glycerol 1-phosphate + H(+). It functions in the pathway protein modification; lipoprotein biosynthesis (diacylglyceryl transfer). Catalyzes the transfer of the diacylglyceryl group from phosphatidylglycerol to the sulfhydryl group of the N-terminal cysteine of a prolipoprotein, the first step in the formation of mature lipoproteins. The chain is Phosphatidylglycerol--prolipoprotein diacylglyceryl transferase from Clostridium botulinum (strain Langeland / NCTC 10281 / Type F).